A 907-amino-acid polypeptide reads, in one-letter code: MSKEDFVNLPFFVENGWIKRTCPVCGRTFWTLDPERKVCGDQPCEEYSFIGRSVGVKPESLSATRKMFIDFFEKRNHTPVKRYPVVARWREDVYLVGASIYDFQPWVTEGLVPPPANPLVISQPSIRLTDLDNVGKTGRHLTGFEMMAHHAFNIRDQRVYWANETVEYAFEVLTKVYGVKPEEITFIFDMWSGGGNAGEDYEVIVRGLEVATLVFMHYKTAEDGSLIPIENRIVDTGYGLERIYWLLTGHYNVYEAVFSGVIDRLRKLSGVEKPPDDLMYRLALKSGRLDFKKPLEALETLRNVSREVGISFEELQRVLEPNEALYALADHTRTIAWMLGDGVVPSNSGAGYLARLLIRRSLRLLRRLQLELPLSEIVLWQIQYWRNDFPEYLELQDEIRDIVDTEEERFEESVKRGEKVLGALLGELKSKGLRVVPAEEIVKLYESHGVPPELVKEKAESEGLEADITGFYSRLAEMRSRAQVQQKEALQLPLDPSRLKEFRPTRLLYYENEKLAEFEATVLGVLDGKYVVLDSTAFYPEGGGQLSDTGVLVYEGGECRVKYAFKVGDIVVHECEGNAPPVGARVKGVVDMERRLALMRHHTATHIVLGALRSVLGKHVWQAGAQKTPDYVRFDFTHHKAITPEQAKAIEALANRVVMEDRPVRKYLLNRTEAEKAFGFTLYQGGAVPQTTLRVVEIPGWDAEACGGTHCDRTGEIGLIKILGFEKIQDGVVRVVFKAGMPALEYVQGMGDKLKNLQEILDASYEGLEEKAKSLKSRIEALEKEVKKLREELLKGGVSVSPVATVQGVQVYVYFSDEYEPREAALAISRTRTSSVILAYNSKGNFALKVTDDLLDRLDAREIGRSVCESLRGKGGGVRDLYQGRIDETKSVDKVIVEALRQALERR.

Zn(2+)-binding residues include H602, H606, C706, and H710.

Belongs to the class-II aminoacyl-tRNA synthetase family. The cofactor is Zn(2+).

The protein localises to the cytoplasm. It catalyses the reaction tRNA(Ala) + L-alanine + ATP = L-alanyl-tRNA(Ala) + AMP + diphosphate. Its function is as follows. Catalyzes the attachment of alanine to tRNA(Ala) in a two-step reaction: alanine is first activated by ATP to form Ala-AMP and then transferred to the acceptor end of tRNA(Ala). Also edits incorrectly charged Ser-tRNA(Ala) and Gly-tRNA(Ala) via its editing domain. The sequence is that of Alanine--tRNA ligase from Thermofilum pendens (strain DSM 2475 / Hrk 5).